The chain runs to 155 residues: Small ribosomal subunit protein bS6 (155 aa).

Positions 115 to 137 (EADAAKAEADAARVEAEAKKAET) are enriched in basic and acidic residues. A disordered region spans residues 115 to 155 (EADAAKAEADAARVEAEAKKAETDETDETVDAETPENEEEN). The span at 138–155 (DETDETVDAETPENEEEN) shows a compositional bias: acidic residues.

The protein belongs to the bacterial ribosomal protein bS6 family.

Functionally, binds together with bS18 to 16S ribosomal RNA. In Desulforapulum autotrophicum (strain ATCC 43914 / DSM 3382 / VKM B-1955 / HRM2) (Desulfobacterium autotrophicum), this protein is Small ribosomal subunit protein bS6.